A 283-amino-acid chain; its full sequence is Co-chaperone protein DjlA (283 aa).

Over 1-6 the chain is Periplasmic; sequence MQIFGK. Residues 7–30 form a helical membrane-spanning segment; sequence ILGGFFGFLFGGFFGAALGIFIGH. The Cytoplasmic portion of the chain corresponds to 31–283; sequence QFDKAKRMAN…DLIKKEKGIK (253 aa). The segment covering 188-197 has biased composition (gly residues); that stretch reads QGGGFSGHQS. Residues 188 to 210 form a disordered region; the sequence is QGGGFSGHQSGGSHQQGQWQQAS. The segment covering 198 to 210 has biased composition (low complexity); sequence GGSHQQGQWQQAS. Positions 217-283 constitute a J domain; the sequence is DAYNLLGISE…DLIKKEKGIK (67 aa).

As to quaternary structure, homodimer.

It localises to the cell inner membrane. Functionally, regulatory DnaK co-chaperone. Direct interaction between DnaK and DjlA is needed for the induction of the wcaABCDE operon, involved in the synthesis of a colanic acid polysaccharide capsule, possibly through activation of the RcsB/RcsC phosphotransfer signaling pathway. The colanic acid capsule may help the bacterium survive conditions outside the host. This chain is Co-chaperone protein DjlA, found in Aliivibrio fischeri (strain ATCC 700601 / ES114) (Vibrio fischeri).